Consider the following 98-residue polypeptide: MTHKYQILYDTLISKINASTNLEINELPILDDDGYDIMYQLYDMFMKKHNLPIKKFIIEEEENKDFDTITFDFKNMPNELKLLLYIFAETHYKALNNL.

This is an uncharacterized protein from Invertebrate iridescent virus 6 (IIV-6).